The sequence spans 289 residues: Pseudouridine-5'-phosphate glycosidase (289 aa).

Residue glutamate 10 is the Proton donor of the active site. Substrate contacts are provided by lysine 71 and valine 91. Aspartate 121 is a binding site for Mn(2+). Substrate is bound at residue 123–125 (SQD). Catalysis depends on lysine 142, which acts as the Nucleophile.

The protein belongs to the pseudouridine-5'-phosphate glycosidase family. Homotrimer. Requires Mn(2+) as cofactor.

It carries out the reaction D-ribose 5-phosphate + uracil = psi-UMP + H2O. In terms of biological role, catalyzes the reversible cleavage of pseudouridine 5'-phosphate (PsiMP) to ribose 5-phosphate and uracil. Functions biologically in the cleavage direction, as part of a pseudouridine degradation pathway. This is Pseudouridine-5'-phosphate glycosidase from Kosmotoga olearia (strain ATCC BAA-1733 / DSM 21960 / TBF 19.5.1).